An 854-amino-acid chain; its full sequence is Rod cGMP-specific 3',5'-cyclic phosphodiesterase subunit beta (854 aa).

Ser-2 is subject to N-acetylserine. GAF domains are found at residues 71 to 220 (NMER…TLYL) and 252 to 429 (DIER…GWSV). One can recognise a PDEase domain in the interval 481–814 (DEDELGEILK…KEWKALADEY (334 aa)). His-557 (proton donor) is an active-site residue. Residues His-561, His-597, Asp-598, and Asp-718 each contribute to the a divalent metal cation site. Residue Cys-851 is the site of S-geranylgeranyl cysteine attachment. Positions 852–854 (CIL) are cleaved as a propeptide — removed in mature form.

Belongs to the cyclic nucleotide phosphodiesterase family. In terms of assembly, oligomer composed of two catalytic chains (alpha and beta), an inhibitory chain (gamma) and the delta chain. Requires a divalent metal cation as cofactor.

Its subcellular location is the membrane. The protein resides in the cell projection. The protein localises to the cilium. It localises to the photoreceptor outer segment. The enzyme catalyses 3',5'-cyclic GMP + H2O = GMP + H(+). Functionally, rod-specific cGMP phosphodiesterase that catalyzes the hydrolysis of 3',5'-cyclic GMP. Necessary for the formation of a functional phosphodiesterase holoenzyme. Involved in retinal circadian rhythm photoentrainment via modulation of UVA and orange light-induced phase-shift of the retina clock. May participate in processes of transmission and amplification of the visual signal. This chain is Rod cGMP-specific 3',5'-cyclic phosphodiesterase subunit beta, found in Homo sapiens (Human).